The sequence spans 110 residues: Keratin, type I cytoskeletal 19 (110 aa).

The head stretch occupies residues 1-8; the sequence is FGSGGVFR. S3 bears the Phosphoserine mark. One can recognise an IF rod domain in the interval 7 to 110; sequence FRITMQNLND…KLEQEIATYR (104 aa). R8 is subject to Omega-N-methylarginine. Positions 9–42 are coil 1A; sequence ITMQNLNDRLASYLDKVRALEQANGELEVKIRDW. Residues 43–45 are linker 1; sequence YQK. The coil 1B stretch occupies residues 46–83; sequence IVLQIDNARTKFETEQALRVLDELTLARKNHEEEISAL. The tract at residues 85–110 is coil 2; that stretch reads ADTERQNQEYQQLMDIKLEQEIATYR. The interval 85–110 is necessary for interaction with PNN; it reads ADTERQNQEYQQLMDIKLEQEIATYR.

The protein belongs to the intermediate filament family. Heterotetramer of two type I and two type II keratins. Interacts with PNN and the actin-binding domain of DMD.

Involved in the organization of myofibers. Together with KRT8, helps to link the contractile apparatus to dystrophin at the costameres of striated muscle. The polypeptide is Keratin, type I cytoskeletal 19 (Mesocricetus auratus (Golden hamster)).